The chain runs to 313 residues: Cytochrome c biogenesis protein CcsA (313 aa).

8 helical membrane-spanning segments follow: residues 9 to 29, 44 to 64, 71 to 91, 101 to 121, 143 to 163, 217 to 237, 244 to 264, and 278 to 298; these read ILTH…LITL, GIIV…ISSG, LYES…IPYF, IIGP…LTEI, MILG…LLVI, VISL…VWAN, WNWD…AIYL, and AIVA…VNLL.

It belongs to the CcmF/CycK/Ccl1/NrfE/CcsA family. As to quaternary structure, may interact with Ccs1.

Its subcellular location is the plastid. It is found in the chloroplast thylakoid membrane. In terms of biological role, required during biogenesis of c-type cytochromes (cytochrome c6 and cytochrome f) at the step of heme attachment. The chain is Cytochrome c biogenesis protein CcsA from Nicotiana tomentosiformis (Tobacco).